The chain runs to 338 residues: Lipoate-protein ligase A (338 aa).

The region spanning 29 to 216 (PATQRVLFLW…AFFAHYGERV (188 aa)) is the BPL/LPL catalytic domain. ATP contacts are provided by residues arginine 71, 76–79 (GAVF), and lysine 134. Position 134 (lysine 134) interacts with (R)-lipoate.

This sequence belongs to the LplA family. In terms of assembly, monomer.

It localises to the cytoplasm. It catalyses the reaction L-lysyl-[lipoyl-carrier protein] + (R)-lipoate + ATP = N(6)-[(R)-lipoyl]-L-lysyl-[lipoyl-carrier protein] + AMP + diphosphate + H(+). Its pathway is protein modification; protein lipoylation via exogenous pathway; protein N(6)-(lipoyl)lysine from lipoate: step 1/2. The protein operates within protein modification; protein lipoylation via exogenous pathway; protein N(6)-(lipoyl)lysine from lipoate: step 2/2. Catalyzes both the ATP-dependent activation of exogenously supplied lipoate to lipoyl-AMP and the transfer of the activated lipoyl onto the lipoyl domains of lipoate-dependent enzymes. The protein is Lipoate-protein ligase A of Escherichia coli O6:H1 (strain CFT073 / ATCC 700928 / UPEC).